The following is a 245-amino-acid chain: tRNA1(Val) (adenine(37)-N6)-methyltransferase (245 aa).

It belongs to the methyltransferase superfamily. tRNA (adenine-N(6)-)-methyltransferase family.

The protein resides in the cytoplasm. It carries out the reaction adenosine(37) in tRNA1(Val) + S-adenosyl-L-methionine = N(6)-methyladenosine(37) in tRNA1(Val) + S-adenosyl-L-homocysteine + H(+). Specifically methylates the adenine in position 37 of tRNA(1)(Val) (anticodon cmo5UAC). This chain is tRNA1(Val) (adenine(37)-N6)-methyltransferase, found in Salmonella paratyphi A (strain ATCC 9150 / SARB42).